Reading from the N-terminus, the 67-residue chain is Guanine nucleotide-binding protein G(I)/G(S)/G(O) subunit gamma-13 (67 aa).

Cys64 is modified (cysteine methyl ester). Residue Cys64 is the site of S-farnesyl cysteine attachment. Positions 65–67 (TIL) are cleaved as a propeptide — removed in mature form.

This sequence belongs to the G protein gamma family. G proteins are composed of 3 units, alpha, beta and gamma.

Its subcellular location is the cell membrane. In terms of biological role, guanine nucleotide-binding proteins (G proteins) are involved as a modulator or transducer in various transmembrane signaling systems. The beta and gamma chains are required for the GTPase activity, for replacement of GDP by GTP, and for G protein-effector interaction. This chain is Guanine nucleotide-binding protein G(I)/G(S)/G(O) subunit gamma-13 (Gng13), found in Mus musculus (Mouse).